The primary structure comprises 594 residues: Developmental and secondary metabolism regulator veA (594 aa).

One can recognise a Velvet domain in the interval 24 to 220 (GRRLFYRIDV…AEQGTRVRIR (197 aa)). A Nuclear localization signal motif is present at residues 38 to 43 (EKCRAC). 2 disordered regions span residues 40–59 (CRACGSGPKSSTDRRPVDPP) and 210–558 (MAEQ…DVEE). The span at 217–229 (VRIRRDVRMRRRD) shows a compositional bias: basic residues. The span at 296-307 (APPPPNPPPPGF) shows a compositional bias: pro residues. Positions 327 to 351 (SHSQYQQPTSSSSSSEQVSSVPQSP) are enriched in low complexity. Over residues 352–362 (AYSSHAAQQHY) the composition is skewed to polar residues. Positions 374–383 (PERRLSDHRS) are enriched in basic and acidic residues. Residues 384 to 403 (SQPNNHPQQSPHQHSYSHRS) show a composition bias toward low complexity. Over residues 405–416 (PQRERFMPDSRR) the composition is skewed to basic and acidic residues. Positions 457–506 (VADTQATPHLPPIRWPRPNMNLPSPPSEHQEALQPLQPAPLHYESQTHQQ) are PEST. The segment covering 523–538 (YSYGYSYSHNHSHGYG) has biased composition (low complexity).

It belongs to the velvet family. VeA subfamily. Component of the heterotrimeric velvet complex composed of LAEA, VEA and VELB; VEA acting as a bridging protein between LAEA and VELB.

The protein localises to the nucleus. It localises to the cytoplasm. In terms of biological role, component of the velvet transcription factor complex that controls sexual/asexual developmental ratio in response to light, promoting sexual development in the darkness while stimulating asexual sporulation under illumination. The velvet complex acts as a global regulator for secondary metabolite gene expression. Regulates of the response to reactive oxygen species (ROS) stress. The protein is Developmental and secondary metabolism regulator veA of Pyricularia oryzae (strain 70-15 / ATCC MYA-4617 / FGSC 8958) (Rice blast fungus).